An 84-amino-acid chain; its full sequence is NADH dehydrogenase [ubiquinone] 1 alpha subcomplex subunit 3 (84 aa).

At A2 the chain carries N-acetylalanine. Residues 19 to 39 (LVVSFSVWGLAIIMPMISPYT) traverse the membrane as a helical segment. Residues 59–84 (DDGNMPDVPSHPQDPLGPSLDWLKNL) form a disordered region.

It belongs to the complex I NDUFA3 subunit family. Complex I is composed of 45 different subunits.

The protein localises to the mitochondrion inner membrane. In terms of biological role, accessory subunit of the mitochondrial membrane respiratory chain NADH dehydrogenase (Complex I), that is believed not to be involved in catalysis. Complex I functions in the transfer of electrons from NADH to the respiratory chain. The immediate electron acceptor for the enzyme is believed to be ubiquinone. In Mus musculus (Mouse), this protein is NADH dehydrogenase [ubiquinone] 1 alpha subcomplex subunit 3 (Ndufa3).